Consider the following 87-residue polypeptide: MQSSIIEITNIKKKIVYQTQITLLLVLELNNIHLEYQCRSGYCGICRIELIKGEVFYLIKQPMAALFKEREIFPCCCKPKGNITIKI.

The 84-residue stretch at 4–87 (SIIEITNIKK…KPKGNITIKI (84 aa)) folds into the 2Fe-2S ferredoxin-type domain. Positions 38, 43, 46, and 75 each coordinate [2Fe-2S] cluster.

[2Fe-2S] cluster is required as a cofactor.

This is an uncharacterized protein from Buchnera aphidicola subsp. Acyrthosiphon pisum (strain APS) (Acyrthosiphon pisum symbiotic bacterium).